A 383-amino-acid chain; its full sequence is MRDVAVIGVSQTKFGELWDVSFRDMITEAGLGAIEDAGVEGADLDAMYVGNMSAGLFIKQEHISSLIADHAGLTPIPSTRVEAACASGGLALRSGIMAVASGYHDIVIAAGVEKMTDVVDPTPAIATASDQEWEAQQGVTFPSLYAMMARRHMYEYGTTREQLAMVSVINHENASNNPRAQFPMKVTVEQVMNSTMVADPLRLLDCSPISDGAAAVILCPADMAREYTDTPVYVKASAQASGTIALHDRRDITRIDATVNAARNAFKMAKLTPGDIDLVEVHDCFSINGILAVEDLGFVEKGEGGRAFEDGMTRIDGDIPVNPSGGLKARGHPLGATGIAQAAEVVWQLRGEAGKRQVEGAEIGMTHNIGGTGGTAAVHIFSR.

The Acyl-thioester intermediate role is filled by Cys85. Cys206, Ser207, Ile209, and Lys328 together coordinate CoA. His332 (proton acceptor) is an active-site residue.

This sequence belongs to the thiolase-like superfamily. Thiolase family. In terms of assembly, interacts with HMG-CoA synthase (HMGCS) that catalyzes the second step in the pathway and with a DUF35 protein. The acetoacetyl-CoA thiolase/HMG-CoA synthase complex channels the intermediate via a fused CoA-binding site, which allows for efficient coupling of the endergonic thiolase reaction with the exergonic HMGCS reaction.

It carries out the reaction 2 acetyl-CoA = acetoacetyl-CoA + CoA. It participates in metabolic intermediate biosynthesis; (R)-mevalonate biosynthesis; (R)-mevalonate from acetyl-CoA: step 1/3. In terms of biological role, catalyzes the condensation of two acetyl-coA molecules into acetoacetyl-CoA. Functions in the mevalonate (MVA) pathway leading to isopentenyl diphosphate (IPP), a key precursor for the biosynthesis of isoprenoid compounds that are building blocks of archaeal membrane lipids. The polypeptide is Acetyl-CoA acetyltransferase (Methanothermobacter thermautotrophicus (strain ATCC 29096 / DSM 1053 / JCM 10044 / NBRC 100330 / Delta H) (Methanobacterium thermoautotrophicum)).